Consider the following 634-residue polypeptide: DNA-directed RNA polymerase subunit gamma (634 aa).

Residues Cys-74, Cys-76, Cys-89, and Cys-92 each coordinate Zn(2+). Mg(2+)-binding residues include Asp-471, Asp-473, and Asp-475.

It belongs to the RNA polymerase beta' chain family. RpoC1 subfamily. In cyanobacteria the RNAP catalytic core is composed of 2 alpha, 1 beta, 1 beta', 1 gamma and 1 omega subunit. When a sigma factor is associated with the core the holoenzyme is formed, which can initiate transcription. Mg(2+) serves as cofactor. It depends on Zn(2+) as a cofactor.

The enzyme catalyses RNA(n) + a ribonucleoside 5'-triphosphate = RNA(n+1) + diphosphate. In terms of biological role, DNA-dependent RNA polymerase catalyzes the transcription of DNA into RNA using the four ribonucleoside triphosphates as substrates. This Synechococcus sp. (strain RCC307) protein is DNA-directed RNA polymerase subunit gamma.